An 803-amino-acid chain; its full sequence is Homeobox protein Wariai (803 aa).

Polar residues predominate over residues 23-41 (SDYDSYEQQYNNPTGSKQY). Residues 23 to 144 (SDYDSYEQQY…PTPYSSNSFS (122 aa)) are disordered. The span at 42-124 (NNNNNNNTNT…NNNNNNNNNN (83 aa)) shows a compositional bias: low complexity. The segment covering 125-138 (QHLSQSQQLSPTPY) has biased composition (polar residues). Positions 162-221 (SKKKRKRTSPDQLKLLEKIFMAHQHPNLNLRSQLAVELHMTARSVQIWFQNRRAKARNME) form a DNA-binding region, homeobox. Residues 288–330 (INGNMGGGGGGGGGSHNHHHHNHNHNHHNHNHNHNHNQPLSNG) are disordered. The span at 291 to 302 (NMGGGGGGGGGS) shows a compositional bias: gly residues. Residues 303-322 (HNHHHHNHNHNHHNHNHNHN) are compositionally biased toward basic residues. ANK repeat units lie at residues 374–403 (KGLSLLFTAAFLGYEYQVRRLIESGANPNI), 407–436 (QGNTPLIAASVLGNQPIVELLLEHRADPNL), 440–469 (EGVSPLFSACKGGHLQIASSLLDHDAEVSV), 474–503 (NGETPLHIASLKGFEKICKLLIETEAKASV), 507–536 (NNRTPLHHACIMGYFSIAKLLICNGADMNA), 540–569 (DGHTPLHTSSLMGHDLITRLLLENGADPNI), 573–602 (EGYTPIHYAVRESRIETVKFLIKFNSKLNI), 606–636 (NGQNLIHLSVQFASLMMGQMIFESKGCEIAA), and 642–671 (QGYTPLYLAAKAGKTNFVKYLLSKGASKKI). Positions 695-760 (KSSNNNNSNS…PPGNKFEEDD (66 aa)) are disordered. The segment covering 696-746 (SSNNNNSNSNINNINNINNINNINSQPNTNSDNNNNNNNNNFNENYSNGNN) has biased composition (low complexity).

Its subcellular location is the nucleus. Putative transcription factor, that seems to be involved in anterior-posterior patterning of the slug, probably by controlling the proportions of prestalk and prespore cells. This is Homeobox protein Wariai (warA) from Dictyostelium discoideum (Social amoeba).